The following is a 382-amino-acid chain: MSTYTRPVMLLLCGLLLLTLAIAVLNTLVPLWLAQANLPTWQVGMVSSSYFTGNLVGTLFTGYLIKRIGFNRSYYLASLIFAAGCVGLGVMVGFWSWMSWRFIAGIGCAMIWVVVESALMCSGTSHNRGRLLAAYMMAYYMGTFLGQLLVSKVSGELLHVLPWVTGMILAGILPLLFTRIVNQQTQARHSSSISAMLKLRQARLGVNGCIISGIVLGSLYGLMPLYLKHQGMANASIGFWMAVLVSAGILGQWPMGRLADKFGRLLVLRVQVFVVILGSIAMLTQAAMAPALFILGAAGFTLYPVAMAWACEKVEHHQLVAMNQALLLSYTVGSLLGPSFAAMLMQNYSDNLLFIMIASVSFIYLLMLLRNAGQTPNPVAHI.

The next 12 membrane-spanning stretches (helical) occupy residues 8–28 (VMLL…LNTL), 45–65 (MVSS…GYLI), 75–95 (YLAS…VGFW), 102–122 (FIAG…LMCS), 131–151 (LLAA…LLVS), 157–177 (LLHV…PLLF), 204–224 (LGVN…GLMP), 231–251 (GMAN…GILG), 270–290 (VQVF…AMAP), 291–311 (ALFI…AWAC), 325–345 (ALLL…AMLM), and 349–369 (SDNL…LMLL).

The protein belongs to the major facilitator superfamily. YcaD (TC 2.A.1.26) family.

It localises to the cell inner membrane. This is an uncharacterized protein from Salmonella enteritidis PT4 (strain P125109).